The following is a 1342-amino-acid chain: DNA-directed RNA polymerase subunit beta (1342 aa).

This sequence belongs to the RNA polymerase beta chain family. As to quaternary structure, the RNAP catalytic core consists of 2 alpha, 1 beta, 1 beta' and 1 omega subunit. When a sigma factor is associated with the core the holoenzyme is formed, which can initiate transcription.

It catalyses the reaction RNA(n) + a ribonucleoside 5'-triphosphate = RNA(n+1) + diphosphate. DNA-dependent RNA polymerase catalyzes the transcription of DNA into RNA using the four ribonucleoside triphosphates as substrates. This chain is DNA-directed RNA polymerase subunit beta, found in Aeromonas salmonicida (strain A449).